We begin with the raw amino-acid sequence, 150 residues long: Protein SLM6 (150 aa).

The Extracellular segment spans residues Met1–Ser76. A helical membrane pass occupies residues Trp77 to Phe97. Topologically, residues Ser98–Ser104 are cytoplasmic. A helical transmembrane segment spans residues Leu105–Ala125. Residues Ala126 to Leu150 lie on the Extracellular side of the membrane.

The protein localises to the membrane. This is Protein SLM6 from Saccharomyces cerevisiae (strain ATCC 204508 / S288c) (Baker's yeast).